The sequence spans 330 residues: MQTLAQHLTSQAVNDSLSHLILTLADTSKAISHAVRHGALAGVLGATEQENVQGETQKKLDIITNDMLKDALKADGTVRGLASEEEDHVVEVSQNGQYLVCFDPLDGSSNIDINSLVGTIFSVLPAPAGELTETSFLQSGRAQLAAGYVLYGPSTMLALTTGQGVQLFTLHPETNEFLLTNAAMSISPDTQEFAINMSNQRFWEAPMQTYIADLLLGKIGPREKSFNMRWIAAMVGDVHRVLSRGGIFTYPTDNKDPKKPYKLRLMYEANPMAFLVEQAGGKASTGYETILDITPTHIHQRVAVILGSSNEVDACLSYHGIDYSEEPNIE.

Residues E84, D103, L105, and D106 each contribute to the Mg(2+) site. Substrate contacts are provided by residues 106 to 109 (DGSS), N196, and K262. E268 is a Mg(2+) binding site.

Belongs to the FBPase class 1 family. Homotetramer. It depends on Mg(2+) as a cofactor.

It is found in the cytoplasm. The catalysed reaction is beta-D-fructose 1,6-bisphosphate + H2O = beta-D-fructose 6-phosphate + phosphate. The protein operates within carbohydrate biosynthesis; gluconeogenesis. This Shewanella baltica (strain OS185) protein is Fructose-1,6-bisphosphatase class 1.